We begin with the raw amino-acid sequence, 405 residues long: Tryptophan synthase beta chain (405 aa).

An N6-(pyridoxal phosphate)lysine modification is found at K95.

It belongs to the TrpB family. Tetramer of two alpha and two beta chains. The cofactor is pyridoxal 5'-phosphate.

The catalysed reaction is (1S,2R)-1-C-(indol-3-yl)glycerol 3-phosphate + L-serine = D-glyceraldehyde 3-phosphate + L-tryptophan + H2O. It participates in amino-acid biosynthesis; L-tryptophan biosynthesis; L-tryptophan from chorismate: step 5/5. In terms of biological role, the beta subunit is responsible for the synthesis of L-tryptophan from indole and L-serine. The protein is Tryptophan synthase beta chain of Pseudomonas putida (strain ATCC 47054 / DSM 6125 / CFBP 8728 / NCIMB 11950 / KT2440).